We begin with the raw amino-acid sequence, 308 residues long: Cobalamin biosynthesis protein CobD (308 aa).

Helical transmembrane passes span 1 to 21, 50 to 70, 71 to 91, 151 to 171, 202 to 222, and 284 to 304; these read MEIL…GDPP, FVYG…PVYF, LLDW…AILF, IGDG…PGVM, VLNF…SFFG, and LVLI…VIYF.

This sequence belongs to the CobD/CbiB family.

Its subcellular location is the cell membrane. It functions in the pathway cofactor biosynthesis; adenosylcobalamin biosynthesis. Functionally, converts cobyric acid to cobinamide by the addition of aminopropanol on the F carboxylic group. In Dehalococcoides mccartyi (strain CBDB1), this protein is Cobalamin biosynthesis protein CobD.